A 398-amino-acid polypeptide reads, in one-letter code: O-methyltransferase aoiO (398 aa).

Residue D251 participates in S-adenosyl-L-methionine binding. Catalysis depends on H299, which acts as the Proton acceptor.

Belongs to the class I-like SAM-binding methyltransferase superfamily. Cation-independent O-methyltransferase family.

O-methyltransferase; part of the gene cluster that mediates the biosynthesis of a methylated derivative of known natural products orthosporin and diaporthin. Seems not to be involved in the biosynthesis of the identified final product of the pathway and its function has still to be determined. The sequence is that of O-methyltransferase aoiO from Aspergillus oryzae (strain ATCC 42149 / RIB 40) (Yellow koji mold).